The chain runs to 117 residues: Probable prefoldin subunit 1 (117 aa).

Belongs to the prefoldin subunit beta family. Heterohexamer of two PFD-alpha type and four PFD-beta type subunits.

The protein resides in the cytoplasm. Binds specifically to cytosolic chaperonin (c-CPN) and transfers target proteins to it. Binds to nascent polypeptide chain and promotes folding in an environment in which there are many competing pathways for nonnative proteins. Has a role in gonadogenesis. The protein is Probable prefoldin subunit 1 (pfd-1) of Caenorhabditis briggsae.